The primary structure comprises 180 residues: uncharacterized protein (180 aa).

An N-terminal signal peptide occupies residues 1–24 (MKKKTIFQCVILFFSILNIHVGMA).

Functionally, part of the elfADCG-ycbUVF fimbrial operon, which promotes adhesion of bacteria to different abiotic surfaces. This is an uncharacterized protein from Escherichia coli (strain K12).